We begin with the raw amino-acid sequence, 116 residues long: MEQKKPLESSASIKYVRISPFKVRRILNQIKGRSAKEALMILKFMPYKPSTLIFKLLKSAVSNSIKNYDEDANVLRVLEARADAGPILKRLCPHAQGRGFPIKKRTCHITIKLSIL.

The protein belongs to the universal ribosomal protein uL22 family. Part of the 50S ribosomal subunit.

It is found in the plastid. Its subcellular location is the chloroplast. Its function is as follows. This protein binds specifically to 23S rRNA. In terms of biological role, the globular domain of the protein is located near the polypeptide exit tunnel on the outside of the subunit, while an extended beta-hairpin is found that lines the wall of the exit tunnel in the center of the 70S ribosome. The sequence is that of Large ribosomal subunit protein uL22c (rpl22) from Euglena gracilis.